Consider the following 88-residue polypeptide: Small ribosomal subunit protein bS20 (88 aa).

The interval 1–28 (MANIKSQIKRNRQNEKRRLRNKSVKSSL) is disordered. The segment covering 7 to 23 (QIKRNRQNEKRRLRNKS) has biased composition (basic residues).

The protein belongs to the bacterial ribosomal protein bS20 family.

Its function is as follows. Binds directly to 16S ribosomal RNA. This chain is Small ribosomal subunit protein bS20, found in Salinispora tropica (strain ATCC BAA-916 / DSM 44818 / JCM 13857 / NBRC 105044 / CNB-440).